Here is a 164-residue protein sequence, read N- to C-terminus: MGNKAERHRAIQEIVRREEIGTQKELVERLRQLGFEVTQATVSRDIAELGLARIALGKGRHRYVLPAADLPENAYEELKRQFGLFVRDVDRGGNLLVVKTAEGHASGIAYLLDRLRRDEIVGTLAGDDTILVVARTEEAAQALEDEFAGLLVEGRALRRALSGS.

This sequence belongs to the ArgR family.

The protein localises to the cytoplasm. The protein operates within amino-acid biosynthesis; L-arginine biosynthesis [regulation]. Functionally, regulates arginine biosynthesis genes. This chain is Arginine repressor, found in Thermus thermophilus (strain ATCC BAA-163 / DSM 7039 / HB27).